A 1444-amino-acid polypeptide reads, in one-letter code: Probable serine/threonine-protein kinase irlC (1444 aa).

A disordered region spans residues 335–370 (TLINNNNNNNNNNNNNNNNNNNNNNNNNNNNNNNSK). Over residues 338–368 (NNNNNNNNNNNNNNNNNNNNNNNNNNNNNNN) the composition is skewed to low complexity. The segment at 495–529 (FTFYLSFGEIFTCSCEDYKREFSCKHMFFILLNYY) adopts an SWIM-type zinc-finger fold. The span at 584–613 (TSPFQSINNNNNNNLNNNNNNNLNNNNNNE) shows a compositional bias: low complexity. Disordered stretches follow at residues 584–619 (TSPF…NKFK) and 864–938 (QKEK…ITPI). 2 coiled-coil regions span residues 593 to 620 (NNNN…KFKE) and 847 to 879 (IKAE…KSKI). Basic residues predominate over residues 864-876 (QKEKKKQKQKQSK). Positions 885-937 (SSSSSSSSSPSTSNTTITSTTPTTTTTTTTTTTPTTTTTTTTTSSPKQKPITP) are enriched in low complexity. The region spanning 981-1246 (RKEENVLGRG…IEKILLHPFF (266 aa)) is the Protein kinase domain. ATP is bound by residues 987–995 (LGRGSNGTL) and Lys1010. Asp1116 (proton acceptor) is an active-site residue. Residues 1279–1444 (NYQEINLKNN…LIYFNDLIIK (166 aa)) form the KEN domain.

It belongs to the protein kinase superfamily. Ser/Thr protein kinase family.

The catalysed reaction is L-seryl-[protein] + ATP = O-phospho-L-seryl-[protein] + ADP + H(+). The enzyme catalyses L-threonyl-[protein] + ATP = O-phospho-L-threonyl-[protein] + ADP + H(+). The polypeptide is Probable serine/threonine-protein kinase irlC (irlC) (Dictyostelium discoideum (Social amoeba)).